Consider the following 693-residue polypeptide: Elongation factor G (693 aa).

The region spanning 8 to 282 (EHTRNIGIMA…AVIDFMPSPT (275 aa)) is the tr-type G domain. Residues 17 to 24 (AHIDAGKT), 81 to 85 (DTPGH), and 135 to 138 (NKMD) contribute to the GTP site.

Belongs to the TRAFAC class translation factor GTPase superfamily. Classic translation factor GTPase family. EF-G/EF-2 subfamily.

The protein localises to the cytoplasm. Its function is as follows. Catalyzes the GTP-dependent ribosomal translocation step during translation elongation. During this step, the ribosome changes from the pre-translocational (PRE) to the post-translocational (POST) state as the newly formed A-site-bound peptidyl-tRNA and P-site-bound deacylated tRNA move to the P and E sites, respectively. Catalyzes the coordinated movement of the two tRNA molecules, the mRNA and conformational changes in the ribosome. The sequence is that of Elongation factor G from Ruminiclostridium cellulolyticum (strain ATCC 35319 / DSM 5812 / JCM 6584 / H10) (Clostridium cellulolyticum).